A 257-amino-acid polypeptide reads, in one-letter code: 5'-nucleotidase SurE (257 aa).

Positions 11, 12, 42, and 99 each coordinate a divalent metal cation.

The protein belongs to the SurE nucleotidase family. The cofactor is a divalent metal cation.

It is found in the cytoplasm. The catalysed reaction is a ribonucleoside 5'-phosphate + H2O = a ribonucleoside + phosphate. Functionally, nucleotidase that shows phosphatase activity on nucleoside 5'-monophosphates. The polypeptide is 5'-nucleotidase SurE (Flavobacterium psychrophilum (strain ATCC 49511 / DSM 21280 / CIP 103535 / JIP02/86)).